Consider the following 360-residue polypeptide: Phospho-N-acetylmuramoyl-pentapeptide-transferase (360 aa).

10 helical membrane passes run 26 to 46 (AILS…IMIK), 70 to 90 (GTPT…ILLW), 94 to 114 (SNPY…IGFV), 132 to 152 (WKYF…YAYG), 168 to 188 (IMPQ…VGTS), 199 to 219 (GLAI…AWAT), 236 to 256 (ASEL…FLWF), 263 to 283 (VFMG…IAVL), 288 to 308 (LILV…ILQV), and 338 to 358 (VIVR…ATLK).

This sequence belongs to the glycosyltransferase 4 family. MraY subfamily. The cofactor is Mg(2+).

The protein localises to the cell inner membrane. The catalysed reaction is UDP-N-acetyl-alpha-D-muramoyl-L-alanyl-gamma-D-glutamyl-meso-2,6-diaminopimeloyl-D-alanyl-D-alanine + di-trans,octa-cis-undecaprenyl phosphate = di-trans,octa-cis-undecaprenyl diphospho-N-acetyl-alpha-D-muramoyl-L-alanyl-D-glutamyl-meso-2,6-diaminopimeloyl-D-alanyl-D-alanine + UMP. The protein operates within cell wall biogenesis; peptidoglycan biosynthesis. Its function is as follows. Catalyzes the initial step of the lipid cycle reactions in the biosynthesis of the cell wall peptidoglycan: transfers peptidoglycan precursor phospho-MurNAc-pentapeptide from UDP-MurNAc-pentapeptide onto the lipid carrier undecaprenyl phosphate, yielding undecaprenyl-pyrophosphoryl-MurNAc-pentapeptide, known as lipid I. This chain is Phospho-N-acetylmuramoyl-pentapeptide-transferase, found in Vibrio campbellii (strain ATCC BAA-1116).